The primary structure comprises 144 residues: Putative pre-16S rRNA nuclease (144 aa).

It belongs to the YqgF nuclease family.

The protein resides in the cytoplasm. Functionally, could be a nuclease involved in processing of the 5'-end of pre-16S rRNA. This Acaryochloris marina (strain MBIC 11017) protein is Putative pre-16S rRNA nuclease.